Here is a 472-residue protein sequence, read N- to C-terminus: Probable glycine dehydrogenase (decarboxylating) subunit 2 (472 aa).

N6-(pyridoxal phosphate)lysine is present on Lys268.

This sequence belongs to the GcvP family. C-terminal subunit subfamily. The glycine cleavage system is composed of four proteins: P, T, L and H. In this organism, the P 'protein' is a heterodimer of two subunits. It depends on pyridoxal 5'-phosphate as a cofactor.

It carries out the reaction N(6)-[(R)-lipoyl]-L-lysyl-[glycine-cleavage complex H protein] + glycine + H(+) = N(6)-[(R)-S(8)-aminomethyldihydrolipoyl]-L-lysyl-[glycine-cleavage complex H protein] + CO2. Its function is as follows. The glycine cleavage system catalyzes the degradation of glycine. The P protein binds the alpha-amino group of glycine through its pyridoxal phosphate cofactor; CO(2) is released and the remaining methylamine moiety is then transferred to the lipoamide cofactor of the H protein. The sequence is that of Probable glycine dehydrogenase (decarboxylating) subunit 2 from Thermoplasma acidophilum (strain ATCC 25905 / DSM 1728 / JCM 9062 / NBRC 15155 / AMRC-C165).